We begin with the raw amino-acid sequence, 159 residues long: Large ribosomal subunit protein uL15 (159 aa).

Positions 1-18 (MKLNEIRDNEGSSKDRIR) are enriched in basic and acidic residues. The tract at residues 1 to 37 (MKLNEIRDNEGSSKDRIRVGRGIGSGKGKTGGRGVKG) is disordered. A compositionally biased stretch (gly residues) spans 21-35 (RGIGSGKGKTGGRGV).

It belongs to the universal ribosomal protein uL15 family. In terms of assembly, part of the 50S ribosomal subunit.

In terms of biological role, binds to the 23S rRNA. This Agrobacterium fabrum (strain C58 / ATCC 33970) (Agrobacterium tumefaciens (strain C58)) protein is Large ribosomal subunit protein uL15.